The following is a 987-amino-acid chain: Vacuolar membrane protease (987 aa).

The Cytoplasmic portion of the chain corresponds to 1 to 14; sequence MATRKARNPLAFMP. A helical transmembrane segment spans residues 15 to 35; that stretch reads WPVTILTTAMYLALIIPLLVI. Topologically, residues 36 to 384 are vacuolar; sequence HHNVPPAPRT…AFAVFRLHTL (349 aa). Asn-51 and Asn-117 each carry an N-linked (GlcNAc...) asparagine glycan. Zn(2+) is bound by residues His-167 and Asp-179. Glu-213 (proton acceptor) is an active-site residue. Positions 214, 239, and 312 each coordinate Zn(2+). A helical transmembrane segment spans residues 385–405; the sequence is FALSVTLLIVAPLTLLVTSVI. The Cytoplasmic segment spans residues 406–435; the sequence is LSRADKMYLFRSSVYSEINDDYIPLRGLRG. The chain crosses the membrane as a helical span at residues 436-456; that stretch reads FFRFPFLISIPTGVTVGLAYM. At 457–466 the chain is on the vacuolar side; that stretch reads VTKVNPFIAH. The helical transmembrane segment at 467-487 threads the bilayer; it reads SSSYAVWSMMISAWIFLAWFV. Residues 488–501 lie on the Cytoplasmic side of the membrane; the sequence is SRVANSARPSAFHR. A helical membrane pass occupies residues 502–522; it reads VYTWTWMFVLTWSLMVVCTVY. Topologically, residues 523–526 are vacuolar; it reads EHEE. A helical membrane pass occupies residues 527–547; it reads GLAGGYFIFFYFAGTFLATWI. Over 548 to 649 the chain is Cytoplasmic; the sequence is SYLELFALPT…WSGVLPRWTW (102 aa). Residues 572-600 form a disordered region; that stretch reads STQGSRLAASGDEHQDDAAEEDPTESTSL. Residues 650-670 form a helical membrane-spanning segment; the sequence is LLQLLITAPVILMLIVPLALL. Over 671–686 the chain is Vacuolar; sequence TTSALSQTGQDGSPQL. Residues 687–707 traverse the membrane as a helical segment; the sequence is LIYLFISCLTALLFAPMLPFI. The Cytoplasmic segment spans residues 708–715; the sequence is HRYTYHLP. A helical membrane pass occupies residues 716-736; that stretch reads IFLLFVFIGTMIYNLVAFPFA. Over 737–987 the chain is Vacuolar; it reads DSNRLKLFFL…KRSSLGALGS (251 aa). Asn-781 and Asn-871 each carry an N-linked (GlcNAc...) asparagine glycan.

It belongs to the peptidase M28 family. The cofactor is Zn(2+).

It is found in the vacuole membrane. May be involved in vacuolar sorting and osmoregulation. In Penicillium rubens (strain ATCC 28089 / DSM 1075 / NRRL 1951 / Wisconsin 54-1255) (Penicillium chrysogenum), this protein is Vacuolar membrane protease.